Here is a 340-residue protein sequence, read N- to C-terminus: Glutaminase 2 (340 aa).

Residues Ser-89, Asn-140, Asn-191, Tyr-215, and Tyr-267 each coordinate substrate.

Belongs to the glutaminase family. In terms of assembly, homotetramer.

It catalyses the reaction L-glutamine + H2O = L-glutamate + NH4(+). The protein is Glutaminase 2 of Yersinia pestis.